We begin with the raw amino-acid sequence, 615 residues long: RUN domain-containing protein 1 (615 aa).

Residues 15–41 (TAVGPKAKDEEEEEEEEESLPPCETVR) form a disordered region. Acidic residues predominate over residues 24–33 (EEEEEEEEES). A Phosphoserine modification is found at Ser-73. Coiled coils occupy residues 76–102 (DATV…LSSH) and 163–238 (RVRG…NLNE). Residues 147 to 180 (DPCGGDESDVLPGDRPRVRGEDQSEQEKRERLET) form a disordered region. Over residues 158-180 (PGDRPRVRGEDQSEQEKRERLET) the composition is skewed to basic and acidic residues. One can recognise an RUN domain in the interval 423 to 604 (ELTTVVRKEL…LKFSLPVDLA (182 aa)). Ser-499 bears the Phosphoserine mark.

Its function is as follows. May play a role as p53/TP53 inhibitor and thus may have oncogenic activity. This Mus musculus (Mouse) protein is RUN domain-containing protein 1 (Rundc1).